The sequence spans 110 residues: UPF0251 protein PYRAB12660 (110 aa).

This sequence belongs to the UPF0251 family.

This is UPF0251 protein PYRAB12660 from Pyrococcus abyssi (strain GE5 / Orsay).